The primary structure comprises 663 residues: Transmembrane 9 superfamily member 2 (663 aa).

Residues 1–28 (MSARLPVLSPPRWPRLLLLSLLLLGAVP) form the signal peptide. Residues 29 to 300 (GPRRSGGFYL…LESMPHTHIQ (272 aa)) are Lumenal-facing. A helical transmembrane segment spans residues 301 to 321 (WFSIMNSLVIVLFLSGMVAMI). Topologically, residues 322–374 (MLRTLHKDIARYNQMDSTEDAQEEFGWKLVHGDIFRPPRKGMLLSVFLGSGTQ) are cytoplasmic. Residues 375-395 (ILIMTFVTLFFACLGFLSPAN) form a helical membrane-spanning segment. The Lumenal segment spans residues 396–398 (RGA). The chain crosses the membrane as a helical span at residues 399–419 (LMTCAVVLWVLLGTPAGYVAA). The Cytoplasmic segment spans residues 420-437 (RFYKSFGGEKWKTNVLLT). The chain crosses the membrane as a helical span at residues 438-458 (SFLCPGIVFADFFIMNLILWG). Topologically, residues 459–466 (EGSSAAIP) are lumenal. Residues 467–487 (FGTLVAILALWFCISVPLTFI) traverse the membrane as a helical segment. Residues 488 to 522 (GAYFGFKKNAIEHPVRTNQIPRQIPEQSFYTKPLP) are Cytoplasmic-facing. Residues 523 to 543 (GIIMGGILPFGCIFIQLFFIL) traverse the membrane as a helical segment. The Lumenal portion of the chain corresponds to 544 to 554 (NSIWSHQMYYM). Residues 555 to 575 (FGFLFLVFIILVITCSEATIL) form a helical membrane-spanning segment. The Cytoplasmic portion of the chain corresponds to 576–591 (LCYFHLCAEDYHWQWR). The helical transmembrane segment at 592–612 (SFLTSGFTAVYFLIYAVHYFF) threads the bilayer. At 613–631 (SKLQITGTASTILYFGYTM) the chain is on the lumenal side. The helical transmembrane segment at 632–652 (IMVLIFFLFTGTIGFFACFWF) threads the bilayer. Topologically, residues 653 to 663 (VTKIYSVVKVD) are cytoplasmic.

It belongs to the nonaspanin (TM9SF) (TC 9.A.2) family.

The protein localises to the endosome membrane. The protein resides in the golgi outpost. It localises to the cytoplasm. Its subcellular location is the cytoskeleton. It is found in the microtubule organizing center. Functionally, in the intracellular compartments, may function as a channel or small molecule transporter. The protein is Transmembrane 9 superfamily member 2 (TM9SF2) of Pongo abelii (Sumatran orangutan).